The primary structure comprises 70 residues: Protein SlyX homolog (70 aa).

The protein belongs to the SlyX family.

This Pseudoalteromonas atlantica (strain T6c / ATCC BAA-1087) protein is Protein SlyX homolog.